A 185-amino-acid polypeptide reads, in one-letter code: uncharacterized protein (185 aa).

This is an uncharacterized protein from Acanthamoeba polyphaga (Amoeba).